A 55-amino-acid polypeptide reads, in one-letter code: uncharacterized protein (55 aa).

The tract at residues 1–30 is disordered; it reads MDKPTVETSAAPVETLVLTEPPAETQAEDS.

This is an uncharacterized protein from Frog virus 3 (isolate Goorha) (FV-3).